A 415-amino-acid polypeptide reads, in one-letter code: Methylthioribose-1-phosphate isomerase (415 aa).

The Proton donor role is filled by aspartate 284.

Belongs to the eIF-2B alpha/beta/delta subunits family. MtnA subfamily.

It is found in the cytoplasm. It localises to the nucleus. The enzyme catalyses 5-(methylsulfanyl)-alpha-D-ribose 1-phosphate = 5-(methylsulfanyl)-D-ribulose 1-phosphate. It participates in amino-acid biosynthesis; L-methionine biosynthesis via salvage pathway; L-methionine from S-methyl-5-thio-alpha-D-ribose 1-phosphate: step 1/6. In terms of biological role, catalyzes the interconversion of methylthioribose-1-phosphate (MTR-1-P) into methylthioribulose-1-phosphate (MTRu-1-P). The protein is Methylthioribose-1-phosphate isomerase of Vanderwaltozyma polyspora (strain ATCC 22028 / DSM 70294 / BCRC 21397 / CBS 2163 / NBRC 10782 / NRRL Y-8283 / UCD 57-17) (Kluyveromyces polysporus).